We begin with the raw amino-acid sequence, 113 residues long: Iron-sulfur cluster insertion protein ErpA (113 aa).

Iron-sulfur cluster-binding residues include C41, C105, and C107.

It belongs to the HesB/IscA family. As to quaternary structure, homodimer. Requires iron-sulfur cluster as cofactor.

Required for insertion of 4Fe-4S clusters for at least IspG. This Actinobacillus succinogenes (strain ATCC 55618 / DSM 22257 / CCUG 43843 / 130Z) protein is Iron-sulfur cluster insertion protein ErpA.